Here is a 31-residue protein sequence, read N- to C-terminus: Cytochrome b6-f complex subunit 6 (31 aa).

A helical transmembrane segment spans residues 4-24 (ITSYFGFLLAALTITSALFIG).

The protein belongs to the PetL family. The 4 large subunits of the cytochrome b6-f complex are cytochrome b6, subunit IV (17 kDa polypeptide, PetD), cytochrome f and the Rieske protein, while the 4 small subunits are PetG, PetL, PetM and PetN. The complex functions as a dimer.

The protein localises to the plastid. Its subcellular location is the chloroplast thylakoid membrane. Functionally, component of the cytochrome b6-f complex, which mediates electron transfer between photosystem II (PSII) and photosystem I (PSI), cyclic electron flow around PSI, and state transitions. PetL is important for photoautotrophic growth as well as for electron transfer efficiency and stability of the cytochrome b6-f complex. The polypeptide is Cytochrome b6-f complex subunit 6 (Coffea arabica (Arabian coffee)).